A 132-amino-acid polypeptide reads, in one-letter code: Myelin P2 protein (132 aa).

Position 2 is an N-acetylserine (S2). (9Z)-octadecenoate is bound by residues R107 and 127–129 (RIY). Residues R107 and 127–129 (RIY) each bind hexadecanoate.

Belongs to the calycin superfamily. Fatty-acid binding protein (FABP) family. Monomer.

The protein resides in the cytoplasm. Its function is as follows. May play a role in lipid transport protein in Schwann cells. May bind cholesterol. This chain is Myelin P2 protein (PMP2), found in Oryctolagus cuniculus (Rabbit).